The chain runs to 746 residues: UvrABC system protein C (746 aa).

The 80-residue stretch at 18–97 folds into the GIY-YIG domain; it reads AKPGVYKWRD…IKEFDPRFNV (80 aa). In terms of domain architecture, UVR spans 211–246; that stretch reads RPYIAQLTRDMKEASAELEFEKAARLRDQIQMLETV. A disordered region spans residues 557-577; sequence ANGNDNGEGGSDISGKGHAVP.

The protein belongs to the UvrC family. In terms of assembly, interacts with UvrB in an incision complex.

It localises to the cytoplasm. The UvrABC repair system catalyzes the recognition and processing of DNA lesions. UvrC both incises the 5' and 3' sides of the lesion. The N-terminal half is responsible for the 3' incision and the C-terminal half is responsible for the 5' incision. In Bifidobacterium longum (strain NCC 2705), this protein is UvrABC system protein C.